The chain runs to 287 residues: ATP synthase gamma chain (287 aa).

This sequence belongs to the ATPase gamma chain family. F-type ATPases have 2 components, CF(1) - the catalytic core - and CF(0) - the membrane proton channel. CF(1) has five subunits: alpha(3), beta(3), gamma(1), delta(1), epsilon(1). CF(0) has three main subunits: a, b and c.

The protein resides in the cell inner membrane. In terms of biological role, produces ATP from ADP in the presence of a proton gradient across the membrane. The gamma chain is believed to be important in regulating ATPase activity and the flow of protons through the CF(0) complex. This Geobacter sp. (strain M21) protein is ATP synthase gamma chain.